A 190-amino-acid polypeptide reads, in one-letter code: Translation initiation factor IF-3 (190 aa).

Belongs to the IF-3 family. As to quaternary structure, monomer.

The protein resides in the cytoplasm. In terms of biological role, IF-3 binds to the 30S ribosomal subunit and shifts the equilibrium between 70S ribosomes and their 50S and 30S subunits in favor of the free subunits, thus enhancing the availability of 30S subunits on which protein synthesis initiation begins. The polypeptide is Translation initiation factor IF-3 (Prochlorococcus marinus (strain MIT 9312)).